We begin with the raw amino-acid sequence, 336 residues long: UDP-galactose transporter 1 (336 aa).

A run of 9 helical transmembrane segments spans residues 11-31, 38-58, 83-103, 131-151, 154-174, 193-213, 227-247, 254-274, and 278-298; these read LAILQWWGFNVTVIIMNKWIF, FPLSVSCVHFICSSIGAYIVI, FVFCINIVLGNVSLRYIPVSF, IWASLVPIVGGILLTSVTELS, MFGFCAALFGCLATSTKTILA, APFATMILGIPALLLEGSGIL, IIILSSGVLAFCLNFSIFYVI, TFNVAGNLKVAVAVMVSWLIF, and ISYMNAVGCGITLVGCTFYGY.

Belongs to the TPT transporter family. TPT (TC 2.A.7.9) subfamily.

Its subcellular location is the membrane. Nucleotide sugar transporter that specifically transports UDP-galactose. This chain is UDP-galactose transporter 1, found in Arabidopsis thaliana (Mouse-ear cress).